The sequence spans 527 residues: Bifunctional purine biosynthesis protein PurH (527 aa).

The MGS-like domain maps to M1–T149.

This sequence belongs to the PurH family.

It catalyses the reaction (6R)-10-formyltetrahydrofolate + 5-amino-1-(5-phospho-beta-D-ribosyl)imidazole-4-carboxamide = 5-formamido-1-(5-phospho-D-ribosyl)imidazole-4-carboxamide + (6S)-5,6,7,8-tetrahydrofolate. The enzyme catalyses IMP + H2O = 5-formamido-1-(5-phospho-D-ribosyl)imidazole-4-carboxamide. It functions in the pathway purine metabolism; IMP biosynthesis via de novo pathway; 5-formamido-1-(5-phospho-D-ribosyl)imidazole-4-carboxamide from 5-amino-1-(5-phospho-D-ribosyl)imidazole-4-carboxamide (10-formyl THF route): step 1/1. It participates in purine metabolism; IMP biosynthesis via de novo pathway; IMP from 5-formamido-1-(5-phospho-D-ribosyl)imidazole-4-carboxamide: step 1/1. This Stenotrophomonas maltophilia (strain K279a) protein is Bifunctional purine biosynthesis protein PurH.